The chain runs to 168 residues: Desumoylating isopeptidase 1 (168 aa).

The PPPDE domain maps to 7–149 (YPVKLYVYDL…FGQALRPLLD (143 aa)). His-38 is a catalytic residue. A Nuclear export signal 1 motif is present at residues 83 to 91 (IFLEYLSSL). Residue Cys-108 is part of the active site. A Nuclear export signal 2 motif is present at residues 139-153 (PFGQALRPLLDSIQI).

This sequence belongs to the DeSI family. In terms of assembly, homodimer. Interacts with UBQLN4; leading to the export of UBQLN4 from the nucleus.

The protein resides in the cytoplasm. It localises to the nucleus. It carries out the reaction S-hexadecanoyl-L-cysteinyl-[protein] + H2O = L-cysteinyl-[protein] + hexadecanoate + H(+). Palmostatin B inhibits its palmitoyl protein thioesterase activity. Its function is as follows. Protease which deconjugates SUMO1, SUMO2 and SUMO3 from some substrate proteins. Has isopeptidase but not SUMO-processing activity. Desumoylates ZBTB46. Collaborates with UBQLN4 in the export of ubiquitinated proteins from the nucleus to the cytoplasm. Exhibits palmitoyl protein thioesterase (S-depalmitoylation) activity towards synthetic substrates 4-methylumbelliferyl-6-S-palmitoyl-beta-D-glucopyranoside and S-depalmitoylation probe 5 (DPP-5). In Homo sapiens (Human), this protein is Desumoylating isopeptidase 1.